The sequence spans 545 residues: MAAKEVVFGNDARVKMLAGVNILANAVKVTLGPKGRNVVLDKSFGSPLITKDGVSVAKEIELEDKFENMGAQMVKEVASKANDAAGDGTTTATVLAQAIVTEGLKAVAAGMNPMDLKRGIDKAVIAAVAELKNLSQDCADSKAIAQVGTISANSDESIGQIIATAMEKVGKEGVITVEEGQALENELDVVEGMQFDRGYLSPYFINKPETGSVELDHPFVLLVDKKISNIRELLPILEGLAKTGKPLLIVAEDVEGEALATLVVNNMRGIVKVAAVKAPGFGDRRKAMLQDVAILTGGTVIAEEIGLELEKATLEDLGTAKRVVITKDNTTIIDGNGEQAQIEARVSQIKQQIEESTSDYDKEKLQERMAKLAGGVAVIKVGAATEVEMKEKKARVEDALHATRAAVEEGVVPGGGVALIRVASKIADVEVANEDQKHGVVIALRAMEAPLRQIATNAGEEASVVANNVKNGSGNYGYNAGNDTYGDMLEMGILDPTKVTRSALQFAASIAGLMITTEAMVAELPKADAPDMGGMGGMGGMGGMM.

Residues 30-33 (TLGP), K51, 87-91 (DGTTT), G415, and D495 contribute to the ATP site.

This sequence belongs to the chaperonin (HSP60) family. As to quaternary structure, forms a cylinder of 14 subunits composed of two heptameric rings stacked back-to-back. Interacts with the co-chaperonin GroES.

The protein resides in the cytoplasm. The enzyme catalyses ATP + H2O + a folded polypeptide = ADP + phosphate + an unfolded polypeptide.. Its function is as follows. Together with its co-chaperonin GroES, plays an essential role in assisting protein folding. The GroEL-GroES system forms a nano-cage that allows encapsulation of the non-native substrate proteins and provides a physical environment optimized to promote and accelerate protein folding. In Shewanella oneidensis (strain ATCC 700550 / JCM 31522 / CIP 106686 / LMG 19005 / NCIMB 14063 / MR-1), this protein is Chaperonin GroEL.